A 393-amino-acid chain; its full sequence is NAD(P)H-quinone oxidoreductase subunit H, chloroplastic (393 aa).

This sequence belongs to the complex I 49 kDa subunit family. In terms of assembly, NDH is composed of at least 16 different subunits, 5 of which are encoded in the nucleus.

The protein resides in the plastid. The protein localises to the chloroplast thylakoid membrane. It catalyses the reaction a plastoquinone + NADH + (n+1) H(+)(in) = a plastoquinol + NAD(+) + n H(+)(out). It carries out the reaction a plastoquinone + NADPH + (n+1) H(+)(in) = a plastoquinol + NADP(+) + n H(+)(out). Functionally, NDH shuttles electrons from NAD(P)H:plastoquinone, via FMN and iron-sulfur (Fe-S) centers, to quinones in the photosynthetic chain and possibly in a chloroplast respiratory chain. The immediate electron acceptor for the enzyme in this species is believed to be plastoquinone. Couples the redox reaction to proton translocation, and thus conserves the redox energy in a proton gradient. This is NAD(P)H-quinone oxidoreductase subunit H, chloroplastic from Cryptomeria japonica (Japanese cedar).